Reading from the N-terminus, the 300-residue chain is Nucleotide-binding protein TM1040_2438 (300 aa).

24 to 31 (GPSGAGRT) serves as a coordination point for ATP. Residue 71–74 (DPRN) coordinates GTP.

The protein belongs to the RapZ-like family.

Functionally, displays ATPase and GTPase activities. The chain is Nucleotide-binding protein TM1040_2438 from Ruegeria sp. (strain TM1040) (Silicibacter sp.).